The following is a 597-amino-acid chain: Siderophore iron transporter 2 (597 aa).

S46 carries the phosphoserine modification. 14 consecutive transmembrane segments (helical) span residues 65–85 (IIVAYLGLYLLSFASSLEQQT), 97–117 (FSAHSNLATINLVGNILLAVV), 131–151 (SESLSLALGMTVLGYLSLAFS), 159–179 (VAYILYICGQTGLGLLSQLII), 190–210 (ILSAIPELPYLATVWIGPVLA), 225–245 (YGIWAFILPTVSLPLLASLFL), 281–301 (LDGLGIVLFVSGFTLLLLPFS), 312–332 (TILTLFTITLSIALLVTLCFY), 357–377 (VLIFTYFMSYYIFSNFLTSFL), 390–410 (LTLNVFVFSMTTTAILSGFLM), 419–439 (LLMISVPMYVLGILGIILFGI), 448–468 (LVLVLILAGMGGGLLTLSAQI), 485–505 (LYLTFSSVGGAFGSAIAGGVW), and 558–578 (KDLFHISLVASLFMFAGLVII).

It belongs to the major facilitator superfamily.

Its subcellular location is the membrane. Its function is as follows. Involved in the transport of siderophore iron and so has a role in iron homeostasis. This is Siderophore iron transporter 2 (str2) from Schizosaccharomyces pombe (strain 972 / ATCC 24843) (Fission yeast).